Reading from the N-terminus, the 154-residue chain is MFDIVLYQPEIPPNTGNIIRLCANTGTRLHLVKPLGFSLEDKQLKRAGLDYHEYANMQVHENWEACCAALAGRRMFALTTKGSARHSTIAFQEGDVFVFGPETRGLPEEIRDQFTPEHRVRLPMMPNNRSLNLSNSAAVLLYEAWRQHDFAGAV.

Residues Leu-78, Gly-100, Leu-122, and Ser-130 each coordinate S-adenosyl-L-methionine.

Belongs to the class IV-like SAM-binding methyltransferase superfamily. RNA methyltransferase TrmH family. TrmL subfamily. In terms of assembly, homodimer.

It localises to the cytoplasm. The enzyme catalyses cytidine(34) in tRNA + S-adenosyl-L-methionine = 2'-O-methylcytidine(34) in tRNA + S-adenosyl-L-homocysteine + H(+). It carries out the reaction 5-carboxymethylaminomethyluridine(34) in tRNA(Leu) + S-adenosyl-L-methionine = 5-carboxymethylaminomethyl-2'-O-methyluridine(34) in tRNA(Leu) + S-adenosyl-L-homocysteine + H(+). Functionally, methylates the ribose at the nucleotide 34 wobble position in the two leucyl isoacceptors tRNA(Leu)(CmAA) and tRNA(Leu)(cmnm5UmAA). Catalyzes the methyl transfer from S-adenosyl-L-methionine to the 2'-OH of the wobble nucleotide. In Methylovorus glucosotrophus (strain SIP3-4), this protein is tRNA (cytidine(34)-2'-O)-methyltransferase.